The following is a 570-amino-acid chain: Berberine bridge enzyme-like 19 (570 aa).

The first 30 residues, 1–30 (MLTTPPRTFVSVPFFFFFLLFLSLPLSSFS), serve as a signal peptide directing secretion. Cys-42 and Cys-105 are disulfide-bonded. Asn-80 carries an N-linked (GlcNAc...) asparagine glycan. An FAD-binding PCMH-type domain is found at 83–257 (STLKPTIIIT…LGYKVKLVPV (175 aa)). A cross-link (6-(S-cysteinyl)-8alpha-(pros-histidyl)-FAD (His-Cys)) is located at residues 120-182 (HDYDGLSYIS…RVHGFPAGVC (63 aa)). Asn-341 and Asn-359 each carry an N-linked (GlcNAc...) asparagine glycan.

It belongs to the oxygen-dependent FAD-linked oxidoreductase family. FAD serves as cofactor. Post-translationally, the FAD cofactor is bound via a bicovalent 6-S-cysteinyl, 8alpha-N1-histidyl FAD linkage.

The protein localises to the secreted. The protein resides in the cell wall. This chain is Berberine bridge enzyme-like 19, found in Arabidopsis thaliana (Mouse-ear cress).